We begin with the raw amino-acid sequence, 513 residues long: Serine/threonine-protein kinase UL13 homolog (513 aa).

The disordered stretch occupies residues 1 to 27; the sequence is MDTESKNKKTTNGGENSNCSHSTRTPD. Positions 10-23 are enriched in polar residues; it reads TTNGGENSNCSHST. Positions 145-487 constitute a Protein kinase domain; the sequence is KEMPIYAGSG…FDSLNIFPYL (343 aa). ATP-binding positions include 151-159 and lysine 170; that span reads AGSGSYGVV. The active-site Proton acceptor is the aspartate 268.

It belongs to the protein kinase superfamily. Ser/Thr protein kinase family. Autophosphorylated.

It localises to the virion tegument. Its subcellular location is the host nucleus. It carries out the reaction L-seryl-[protein] + ATP = O-phospho-L-seryl-[protein] + ADP + H(+). The catalysed reaction is L-threonyl-[protein] + ATP = O-phospho-L-threonyl-[protein] + ADP + H(+). Functionally, multifunctional serine/threonine kinase that plays a role in several processes including egress of virus particles from the nucleus, modulation of the actin cytoskeleton and regulation of viral and cellular gene expression. This is Serine/threonine-protein kinase UL13 homolog (MDV025) from Gallid herpesvirus 2 (strain Chicken/Md5/ATCC VR-987) (GaHV-2).